A 430-amino-acid chain; its full sequence is tRNA(Ile)-lysidine synthase (430 aa).

27 to 32 (SGGSDS) lines the ATP pocket.

Belongs to the tRNA(Ile)-lysidine synthase family.

Its subcellular location is the cytoplasm. It catalyses the reaction cytidine(34) in tRNA(Ile2) + L-lysine + ATP = lysidine(34) in tRNA(Ile2) + AMP + diphosphate + H(+). Ligates lysine onto the cytidine present at position 34 of the AUA codon-specific tRNA(Ile) that contains the anticodon CAU, in an ATP-dependent manner. Cytidine is converted to lysidine, thus changing the amino acid specificity of the tRNA from methionine to isoleucine. This Rickettsia typhi (strain ATCC VR-144 / Wilmington) protein is tRNA(Ile)-lysidine synthase.